Consider the following 290-residue polypeptide: HTH-type transcriptional regulator BsdA (290 aa).

The 59-residue stretch at 1 to 59 folds into the HTH lysR-type domain; that stretch reads MDIRQLRYFITIAQEQKITSAAKKLHMAQPPLSRQLKQLEDELGVVLFDRNKKKQMTLT. Positions 18-37 form a DNA-binding region, H-T-H motif; it reads ITSAAKKLHMAQPPLSRQLK.

This sequence belongs to the LysR transcriptional regulatory family.

In terms of biological role, could be a positive regulator of bsdBCD expression in response to salicylic acid. This Bacillus subtilis (strain 168) protein is HTH-type transcriptional regulator BsdA (bsdA).